The chain runs to 159 residues: MPRKGLRPRDRRALPEADYKYDSVLVARFVNKINFEGKKATAEKIVADSMVIIADKTKEDAMTVFNRCIETVRPLLELKARRVGGATYQVPVEVKPLRSTSLAMCWLLDAARSRKGRPMAEKLAEEIILGSKKEGAAFKKREDTHRMAEANRAFAHFKW.

Belongs to the universal ribosomal protein uS7 family. Part of the 30S ribosomal subunit. Contacts proteins S9 and S11.

Its function is as follows. One of the primary rRNA binding proteins, it binds directly to 16S rRNA where it nucleates assembly of the head domain of the 30S subunit. Is located at the subunit interface close to the decoding center, probably blocks exit of the E-site tRNA. This Elusimicrobium minutum (strain Pei191) protein is Small ribosomal subunit protein uS7.